The following is a 382-amino-acid chain: Low-specificity L-threonine aldolase (382 aa).

Residue lysine 214 is modified to N6-(pyridoxal phosphate)lysine.

The protein belongs to the threonine aldolase family. In terms of assembly, homotetramer. Pyridoxal 5'-phosphate is required as a cofactor.

The enzyme catalyses L-threonine = acetaldehyde + glycine. It catalyses the reaction L-allo-threonine = acetaldehyde + glycine. It functions in the pathway amino-acid degradation; L-threonine degradation via aldolase pathway; acetaldehyde and glycine from L-threonine: step 1/1. This chain is Low-specificity L-threonine aldolase (GLY1), found in Eremothecium gossypii (strain ATCC 10895 / CBS 109.51 / FGSC 9923 / NRRL Y-1056) (Yeast).